The primary structure comprises 425 residues: Elongation factor 1-alpha (425 aa).

The 217-residue stretch at Lys-5–Thr-221 folds into the tr-type G domain. The tract at residues Gly-14 to Ser-21 is G1. GTP is bound at residue Gly-14 to Ser-21. Residue Ser-21 coordinates Mg(2+). The G2 stretch occupies residues Gly-70–Asp-74. The interval Asp-91–Gly-94 is G3. GTP is bound by residues Asp-91 to His-95 and Asn-146 to Asp-149. The G4 stretch occupies residues Asn-146 to Asp-149. Residues Ser-185–Leu-187 are G5.

It belongs to the TRAFAC class translation factor GTPase superfamily. Classic translation factor GTPase family. EF-Tu/EF-1A subfamily.

It is found in the cytoplasm. The catalysed reaction is GTP + H2O = GDP + phosphate + H(+). Its function is as follows. GTP hydrolase that promotes the GTP-dependent binding of aminoacyl-tRNA to the A-site of ribosomes during protein biosynthesis. The protein is Elongation factor 1-alpha of Methanoregula boonei (strain DSM 21154 / JCM 14090 / 6A8).